The primary structure comprises 815 residues: MAALASFTRNSRSYGQQPIDVTQQGQRDRSVMSLDAQGRSKMSNINYTRPAALSTSDSTIGVFRRAPSSFSGASSSSSNHHHPVYHSHNSLPPTLIGGSPHSASSNSLAQGHRNPALGSGNTLTRSYHQPSSTNSSTSNLHGPLGTYSRDLKQAIRDISPPVINSSANPHLVNYIHTSSFDNGSYEFPSGQAQQQRRLGGSQQHLAPLQQTSSSLYSNPQSSSSQLLGQQAVRSNYAYQQSLPRQQHINSHQTQAFFGTIRAPGNSTNIVTPLRASKTMIDVLAPVRDSVAAQATTGALPSVGTSSSNGSSNSSSGVGSGGSGSLMTQSIGGPNKHLSASHSTLNTASTHDSMMHTKIPKSPSNESLSRSHTSSSGGSQGGHNSNSGSNSGFRPEDAVQTFGAKLVPYEKNEIYNYTRVFFVGSHAKKQPGVIGGANNGGYDDENGSYQLVVHDHIAYRYEVLKVIGKGSFGQVIKAFDHKYQQYVALKLVRNEKRFHRQADEEIRILDHLRRQDSDGTHNIIHMLDYFNFRNHKCITFELLSINLYELIKRNKFQGFSLMLVRKFAYSMLLCLDLLQKNRLIHCDLKPENVLLKQQGRSGIKVIDFGSSCFDDQRIYTYIQSRFYRAPEVILGTKYGMPIDMWSLGCILAELLTGYPLLPGEDENDQLALIIELLGMPPPKSLETAKRARTFITSKGYPRYCTATSMPDGSVVLAGARSKRGKMRGPPESRSWSTALKNMGDELFVDFLKRCLDWDPETRMTPAQALKHKWLRRRLPNPPRDGMDSMGGLADHDKKADLPNIDSNANILMRKKF.

Disordered stretches follow at residues 1–49 (MAAL…NYTR), 67–146 (PSSF…PLGT), 185–204 (YEFP…SQQH), and 298–395 (ALPS…FRPE). Polar residues-rich tracts occupy residues 7 to 25 (FTRN…TQQG) and 40 to 49 (SKMSNINYTR). Positions 68–78 (SSFSGASSSSS) are enriched in low complexity. Composition is skewed to polar residues over residues 119–140 (SGNT…TSNL) and 190–204 (GQAQ…SQQH). Over residues 301–316 (SVGTSSSNGSSNSSSG) the composition is skewed to low complexity. Positions 325–351 (LMTQSIGGPNKHLSASHSTLNTASTHD) are enriched in polar residues. Position 361 is a phosphoserine; by cdk-1 (serine 361). Residues 363–391 (SNESLSRSHTSSSGGSQGGHNSNSGSNSG) are compositionally biased toward low complexity. Positions 460–773 (YEVLKVIGKG…PAQALKHKWL (314 aa)) constitute a Protein kinase domain. Residues 466–474 (IGKGSFGQV) and lysine 489 contribute to the ATP site. Aspartate 586 functions as the Proton acceptor in the catalytic mechanism. Residue tyrosine 620 is modified to Phosphotyrosine; by autocatalysis.

The protein belongs to the protein kinase superfamily. CMGC Ser/Thr protein kinase family. MNB/DYRK subfamily. As to quaternary structure, part of a complex, consisting of pseudophosphatases egg-3, egg-4, egg-5 and kinase mbk-2. Interacts (via Tyr-618 and Tyr-620) with egg-4 (via tyrosine-protein phosphatase domain) and egg-5 (via tyrosine-protein phosphatase domain); mbk-2 tyrosine phosphorylation enhances the interaction. The interaction inhibits mbk-2 kinase activity and is required for mbk-2 oocyte cortex localization. Interacts (via N-terminus) with egg-3 (via tyrosine-protein phosphatase domain); the interaction does not affect mbk-2 kinase activity, is enhanced by mbk-2 tyrosine phosphorylation status and requires prior binding of mbk-2 to egg-4 and egg-5. Requires Mg(2+) as cofactor. In terms of processing, autophosphorylated.

The protein localises to the cytoplasm. It localises to the cell cortex. It carries out the reaction L-seryl-[protein] + ATP = O-phospho-L-seryl-[protein] + ADP + H(+). The catalysed reaction is L-threonyl-[protein] + ATP = O-phospho-L-threonyl-[protein] + ADP + H(+). The enzyme catalyses L-tyrosyl-[protein] + ATP = O-phospho-L-tyrosyl-[protein] + ADP + H(+). Activated during oocyte maturation by phosphorylation on Ser-361 by cdk-1. The pseudotyrosine phosphatases egg-4 and egg-5 sequester activated mbk-2 until the meiotic divisions and inhibit mbk-2 kinase activity directly, using a mixed-inhibition mechanism that does not involve tyrosine dephosphorylation. Required for oocyte-to-zygote transition in which it phosphorylates oocyte proteins, including mei-1, oma-1, oma-2, mex-5, and mex-6, modifying their activity and/or stability following meiosis. Through phosphorylation of P granule components including meg-1, promotes the disassembly of zygotic P granules in the anterior cytoplasm during zygote polarization, and thus plays a role in P granule distribution and segregation in early stage embryos following meiosis. Functions in both spindle positioning and in the posterior localization of cytoplasmic determinants, including pie-1, pos-1, and pgl-1, in early embryos. Involved in the asymmetric distribution of plk-1 at the 2-cell embryonic stage. This chain is Dual specificity tyrosine-phosphorylation-regulated kinase mbk-2, found in Caenorhabditis briggsae.